The sequence spans 413 residues: Peptidase T (413 aa).

H81 serves as a coordination point for Zn(2+). D83 is a catalytic residue. D143 contributes to the Zn(2+) binding site. E178 acts as the Proton acceptor in catalysis. Zn(2+)-binding residues include E179, D201, and H383.

This sequence belongs to the peptidase M20B family. Zn(2+) serves as cofactor.

Its subcellular location is the cytoplasm. It carries out the reaction Release of the N-terminal residue from a tripeptide.. In terms of biological role, cleaves the N-terminal amino acid of tripeptides. This chain is Peptidase T, found in Lactococcus lactis subsp. cremoris (Streptococcus cremoris).